The sequence spans 462 residues: BBSome complex member bbs-4 (462 aa).

Residues 1-46 (MEASNQDEIIGTDVIPNEQDNPEEVVPEPTSLDVPPPPPERAPSAP) are disordered. TPR repeat units lie at residues 89–122 (EAAF…SGKN), 124–156 (RYFY…MKDN), 199–232 (ATLI…QPDN), 234–266 (EVMN…DPAN), 268–300 (QAIL…SDYN), 335–368 (YKIS…YPQN), and 369–402 (AKAV…KKNP).

It belongs to the BBS4 family. In terms of assembly, part of BBSome complex, that contains at least bbs-1, bbs-2, bbs-4, bbs-5, osm-12, bbs-8/ttc-8 and bbs-9. Interacts (via C-terminus) with bbs-5; the interaction is direct.

It localises to the cytoplasm. The protein resides in the cytoskeleton. The protein localises to the microtubule organizing center. Its subcellular location is the centrosome. It is found in the cell projection. It localises to the cilium membrane. Functionally, component of the BBSome complex. The BBSome complex is thought to function as a coat complex required for sorting of specific membrane proteins to the primary cilia. The BBSome complex is required for ciliogenesis but is dispensable for centriolar satellite function. Required for proper BBSome complex assembly and its ciliary localization. May be required for microtubule anchoring at the centrosome but not for microtubule nucleation. May be required for the dynein-mediated transport of pericentriolar proteins to the centrosome. Required, redundantly with bbs-5, for cilia biogenesis and both the assembly and movement of intraflagellar transport proteins along the ciliary axoneme. Plays a role in the removal of degraded mechanosensory receptors within the cilia. This is BBSome complex member bbs-4 from Caenorhabditis elegans.